The chain runs to 185 residues: Transcription termination/antitermination protein NusG (185 aa).

In terms of domain architecture, KOW spans valine 134 to valine 164.

This sequence belongs to the NusG family.

Participates in transcription elongation, termination and antitermination. This Lactococcus lactis subsp. lactis (strain IL1403) (Streptococcus lactis) protein is Transcription termination/antitermination protein NusG.